The primary structure comprises 370 residues: 2-Hydroxyacid oxidase 1 (370 aa).

The region spanning 1–365 (MLPRLVCISD…DKTLVRKNPL (365 aa)) is the FMN hydroxy acid dehydrogenase domain. Tyr-26 provides a ligand contact to glyoxylate. FMN-binding positions include 79 to 81 (ATA), Ser-108, and Gln-130. Tyr-132 is a glyoxylate binding site. FMN is bound at residue Thr-158. Residue Arg-167 coordinates glyoxylate. An N6-succinyllysine modification is found at Lys-184. Residues Ser-194 and Ser-230 each carry the phosphoserine modification. Residues Lys-236 and Ser-258 each contribute to the FMN site. 2 residues coordinate glyoxylate: His-260 and Arg-263. His-260 (proton acceptor) is an active-site residue. Residues 291-295 (DGGVR) and 314-315 (GR) contribute to the FMN site. A Microbody targeting signal motif is present at residues 368-370 (SKI).

The protein belongs to the FMN-dependent alpha-hydroxy acid dehydrogenase family. As to quaternary structure, homotetramer. The cofactor is FMN. In terms of tissue distribution, liver.

The protein localises to the peroxisome matrix. The enzyme catalyses a (2S)-2-hydroxycarboxylate + O2 = a 2-oxocarboxylate + H2O2. It carries out the reaction glycolate + O2 = glyoxylate + H2O2. The catalysed reaction is glyoxylate + O2 + H2O = oxalate + H2O2 + H(+). It catalyses the reaction 2-hydroxyhexadecanoate + O2 = 2-oxohexadecanoate + H2O2. The enzyme catalyses 2-hydroxyoctanoate + O2 = 2-oxooctanoate + H2O2. It functions in the pathway amino-acid biosynthesis; glycine biosynthesis. Broad substrate specificity (S)-2-hydroxy-acid oxidase that preferentially oxidizes glycolate. The glyoxylate produced by the oxidation of glycolate can then be utilized by alanine-glyoxylate aminotransferase for the peroxisomal synthesis of glycine; this pathway appears to be an important step for the detoxification of glyoxylate which, if allowed to accumulate, may be metabolized to oxalate with formation of kidney stones. Can also catalyze the oxidation glyoxylate, and long chain hydroxyacids such as 2-hydroxyhexadecanoate and 2-hydroxyoctanoate. Active in vitro with the artificial electron acceptor 2,6-dichlorophenolindophenol (DCIP), but O2 is believed to be the physiological electron acceptor, leading to the production of H2O2. The sequence is that of 2-Hydroxyacid oxidase 1 from Mus musculus (Mouse).